We begin with the raw amino-acid sequence, 235 residues long: RNA polymerase sigma-E factor (235 aa).

The Polymerase core binding signature appears at 82-95 (DLISVGTIGLIKAV). A DNA-binding region (H-T-H motif) is located at residues 202–221 (QKEVADMLGISQSYISRLEK).

The protein belongs to the sigma-70 factor family.

Its function is as follows. Sigma factors are initiation factors that promote the attachment of RNA polymerase to specific initiation sites and are then released. This sigma factor is responsible for the expression of sporulation specific genes. This chain is RNA polymerase sigma-E factor (sigE), found in Clostridium acetobutylicum (strain ATCC 824 / DSM 792 / JCM 1419 / IAM 19013 / LMG 5710 / NBRC 13948 / NRRL B-527 / VKM B-1787 / 2291 / W).